The following is a 338-amino-acid chain: Glycerol-3-phosphate dehydrogenase [NAD(P)+] (338 aa).

S12, W13, and K110 together coordinate NADPH. Sn-glycerol 3-phosphate-binding residues include K110, G141, and S143. A145 contributes to the NADPH binding site. K196, D249, S259, R260, and N261 together coordinate sn-glycerol 3-phosphate. K196 acts as the Proton acceptor in catalysis. NADPH is bound at residue R260. Residues V284 and E286 each contribute to the NADPH site.

This sequence belongs to the NAD-dependent glycerol-3-phosphate dehydrogenase family.

Its subcellular location is the cytoplasm. It catalyses the reaction sn-glycerol 3-phosphate + NAD(+) = dihydroxyacetone phosphate + NADH + H(+). The catalysed reaction is sn-glycerol 3-phosphate + NADP(+) = dihydroxyacetone phosphate + NADPH + H(+). The protein operates within membrane lipid metabolism; glycerophospholipid metabolism. Its function is as follows. Catalyzes the reduction of the glycolytic intermediate dihydroxyacetone phosphate (DHAP) to sn-glycerol 3-phosphate (G3P), the key precursor for phospholipid synthesis. This Lactiplantibacillus plantarum (strain ATCC BAA-793 / NCIMB 8826 / WCFS1) (Lactobacillus plantarum) protein is Glycerol-3-phosphate dehydrogenase [NAD(P)+].